Reading from the N-terminus, the 199-residue chain is Recombination protein RecR (199 aa).

Residues 58–73 (CSICCNITDTDPCSMC) form a C4-type zinc finger. Positions 81-176 (SVICVVEDPR…KVTRIAHGLP (96 aa)) constitute a Toprim domain.

This sequence belongs to the RecR family.

May play a role in DNA repair. It seems to be involved in an RecBC-independent recombinational process of DNA repair. It may act with RecF and RecO. This is Recombination protein RecR from Clostridioides difficile (strain 630) (Peptoclostridium difficile).